The following is a 647-amino-acid chain: MSHQSDLIATDIDAYLKQHEQKQLLRFITCGSVDDGKSTLIGRLLYDSKLVYEDELAKVQSDSVRQGSVAGGFDPSLFMDGLKEEREQGITIDVAYRYFSTAKRKFIIADTPGHEQYTRNMATGASSADLAIILIDARHGVLTQTRRHSFIVSLLGIRHVVVAVNKMDIDGVDYSEDRFNEICDDYRSFATRLDLPDLHFIPISALNGDNLVDRSENMPWYTGSTLMNFLETVYIGSDRNLQDFRLPVQLVNRPNLNFRGFCGTIASGIIRKGEEITVLPSRQKSKVKEIVTYDGNLDEAYAPLAVTLTLEDEIDASRGDMIVRSGNLPRSESDVEAMLVWMNEEAMVPGKTYLVKHSTQTVPGNVETLAYKVDVNDLHRMPAPTLELNEIGRVRLSLSAPIHHDPYRRNRTTGAIILVDRITNATVAAGMILDRGTTGSHKSVWDDEVSTDDSSDALSTVTTEERAARFGQKPATVLLTGLTGSGKTSIARAVERKLFDAGRSVAVVDGEFVRRGLSRDLGFSADDRSENLRRSGHLAHTLNDAGLICLASLVAPSDDVRQKVGKLIGEDQFLVVHVATPLDVCRERDTKGQYAKADAGELSNFPGVTAKYDVPTNPDLAVDASTTSIAECADAVVELLKLKGFIK.

Positions 1–472 (MSHQSDLIAT…TEERAARFGQ (472 aa)) are sulfate adenylyltransferase. The 218-residue stretch at 22–239 (KQLLRFITCG…LETVYIGSDR (218 aa)) folds into the tr-type G domain. The tract at residues 31–38 (GSVDDGKS) is G1. Residue 31-38 (GSVDDGKS) coordinates GTP. Positions 89-93 (GITID) are G2. The segment at 110–113 (DTPG) is G3. GTP-binding positions include 110–114 (DTPGH) and 165–168 (NKMD). The G4 stretch occupies residues 165–168 (NKMD). Positions 204 to 206 (SAL) are G5. An adenylyl-sulfate kinase region spans residues 473–614 (KPATVLLTGL…FPGVTAKYDV (142 aa)). 481–488 (GLTGSGKT) contributes to the ATP binding site.

This sequence in the C-terminal section; belongs to the APS kinase family. It in the N-terminal section; belongs to the TRAFAC class translation factor GTPase superfamily. Classic translation factor GTPase family. CysN/NodQ subfamily. In terms of assembly, heterodimer composed of CysD, the smaller subunit, and CysNC.

The catalysed reaction is sulfate + ATP + H(+) = adenosine 5'-phosphosulfate + diphosphate. It carries out the reaction adenosine 5'-phosphosulfate + ATP = 3'-phosphoadenylyl sulfate + ADP + H(+). It functions in the pathway sulfur metabolism; hydrogen sulfide biosynthesis; sulfite from sulfate: step 1/3. The protein operates within sulfur metabolism; hydrogen sulfide biosynthesis; sulfite from sulfate: step 2/3. In terms of biological role, with CysD forms the ATP sulfurylase (ATPS) that catalyzes the adenylation of sulfate producing adenosine 5'-phosphosulfate (APS) and diphosphate, the first enzymatic step in sulfur assimilation pathway. APS synthesis involves the formation of a high-energy phosphoric-sulfuric acid anhydride bond driven by GTP hydrolysis by CysN coupled to ATP hydrolysis by CysD. Functionally, APS kinase catalyzes the synthesis of activated sulfate. The chain is Bifunctional enzyme CysN/CysC (cysNC) from Rhodopirellula baltica (strain DSM 10527 / NCIMB 13988 / SH1).